The sequence spans 147 residues: Lysozyme C, intestinal isozyme (147 aa).

The N-terminal stretch at 1-18 (MKAVLILGLLLLSVTVQG) is a signal peptide. The C-type lysozyme domain occupies 19–147 (KKFEKCELAR…VSSYIRGCKL (129 aa)). 4 cysteine pairs are disulfide-bonded: Cys24–Cys145, Cys48–Cys133, Cys83–Cys99, and Cys95–Cys113. Active-site residues include Glu53 and Asp71.

It belongs to the glycosyl hydrolase 22 family.

It carries out the reaction Hydrolysis of (1-&gt;4)-beta-linkages between N-acetylmuramic acid and N-acetyl-D-glucosamine residues in a peptidoglycan and between N-acetyl-D-glucosamine residues in chitodextrins.. Functionally, lysozymes have primarily a bacteriolytic function; those in tissues and body fluids are associated with the monocyte-macrophage system and enhance the activity of immunoagents. In Bos taurus (Bovine), this protein is Lysozyme C, intestinal isozyme.